The sequence spans 443 residues: Probable D-serine dehydratase (443 aa).

At lysine 118 the chain carries N6-(pyridoxal phosphate)lysine.

Belongs to the serine/threonine dehydratase family. DsdA subfamily. Pyridoxal 5'-phosphate serves as cofactor.

It carries out the reaction D-serine = pyruvate + NH4(+). This is Probable D-serine dehydratase from Aeromonas salmonicida (strain A449).